The following is a 198-amino-acid chain: Lipoprotein signal peptidase (198 aa).

A disordered region spans residues 1-34 (MDDERVSQDPTAENETDAEDRNDDDPSGSAPPQP). Acidic residues predominate over residues 12–26 (AENETDAEDRNDDDP). Helical transmembrane passes span 42–62 (LLFV…ILAV), 92–112 (MATG…IGVV), and 120–140 (SPWW…NLVD). Residues aspartate 155 and aspartate 169 contribute to the active site. A helical membrane pass occupies residues 167–187 (VADSGIVCGAILLVVLTLIGL).

The protein belongs to the peptidase A8 family.

The protein resides in the cell membrane. It carries out the reaction Release of signal peptides from bacterial membrane prolipoproteins. Hydrolyzes -Xaa-Yaa-Zaa-|-(S,diacylglyceryl)Cys-, in which Xaa is hydrophobic (preferably Leu), and Yaa (Ala or Ser) and Zaa (Gly or Ala) have small, neutral side chains.. The protein operates within protein modification; lipoprotein biosynthesis (signal peptide cleavage). Functionally, this protein specifically catalyzes the removal of signal peptides from prolipoproteins. This is Lipoprotein signal peptidase from Rhodococcus jostii (strain RHA1).